Consider the following 246-residue polypeptide: Uridylate kinase (246 aa).

10-13 is an ATP binding site; the sequence is KLSG. Glycine 52 lines the UMP pocket. ATP is bound by residues glycine 53 and arginine 57. Residues aspartate 72 and 133 to 140 each bind UMP; that span reads TGNPFFTT. Threonine 160, tyrosine 166, and aspartate 169 together coordinate ATP.

The protein belongs to the UMP kinase family. Homohexamer.

Its subcellular location is the cytoplasm. It catalyses the reaction UMP + ATP = UDP + ADP. It participates in pyrimidine metabolism; CTP biosynthesis via de novo pathway; UDP from UMP (UMPK route): step 1/1. Inhibited by UTP. In terms of biological role, catalyzes the reversible phosphorylation of UMP to UDP. The polypeptide is Uridylate kinase (Halorhodospira halophila (strain DSM 244 / SL1) (Ectothiorhodospira halophila (strain DSM 244 / SL1))).